The following is a 120-amino-acid chain: UPF0145 protein Mboo_1021 (120 aa).

The protein belongs to the UPF0145 family.

This is UPF0145 protein Mboo_1021 from Methanoregula boonei (strain DSM 21154 / JCM 14090 / 6A8).